A 648-amino-acid polypeptide reads, in one-letter code: Threonine--tRNA ligase (648 aa).

A TGS domain is found at 1–61 (MIDIILPDGS…INTATVKAIT (61 aa)). The catalytic stretch occupies residues 243 to 549 (DHRKLGRELE…LIEHYSGKLP (307 aa)). Zn(2+)-binding residues include Cys-349, His-400, and His-526.

The protein belongs to the class-II aminoacyl-tRNA synthetase family. Homodimer. Requires Zn(2+) as cofactor.

The protein resides in the cytoplasm. The enzyme catalyses tRNA(Thr) + L-threonine + ATP = L-threonyl-tRNA(Thr) + AMP + diphosphate + H(+). Functionally, catalyzes the attachment of threonine to tRNA(Thr) in a two-step reaction: L-threonine is first activated by ATP to form Thr-AMP and then transferred to the acceptor end of tRNA(Thr). Also edits incorrectly charged L-seryl-tRNA(Thr). This Orientia tsutsugamushi (strain Ikeda) (Rickettsia tsutsugamushi) protein is Threonine--tRNA ligase.